The chain runs to 363 residues: Peptide chain release factor 2 (363 aa).

Gln251 is modified (N5-methylglutamine).

Belongs to the prokaryotic/mitochondrial release factor family. Post-translationally, methylated by PrmC. Methylation increases the termination efficiency of RF2.

Its subcellular location is the cytoplasm. Peptide chain release factor 2 directs the termination of translation in response to the peptide chain termination codons UGA and UAA. The polypeptide is Peptide chain release factor 2 (Helicobacter pylori (strain P12)).